Reading from the N-terminus, the 123-residue chain is Small ribosomal subunit protein uS12cz/uS12cy (123 aa).

It belongs to the universal ribosomal protein uS12 family. Part of the 30S ribosomal subunit.

The protein localises to the plastid. The protein resides in the chloroplast. With S4 and S5 plays an important role in translational accuracy. Located at the interface of the 30S and 50S subunits. The polypeptide is Small ribosomal subunit protein uS12cz/uS12cy (rps12-A) (Eucalyptus globulus subsp. globulus (Tasmanian blue gum)).